Consider the following 66-residue polypeptide: Large ribosomal subunit protein bL31 (66 aa).

Positions 16, 18, 36, and 39 each coordinate Zn(2+).

It belongs to the bacterial ribosomal protein bL31 family. Type A subfamily. As to quaternary structure, part of the 50S ribosomal subunit. The cofactor is Zn(2+).

Binds the 23S rRNA. This Nitratiruptor sp. (strain SB155-2) protein is Large ribosomal subunit protein bL31.